The following is a 201-amino-acid chain: Small ribosomal subunit protein uS4 (201 aa).

Residues 91-154 form the S4 RNA-binding domain; sequence SRLDNVIYRA…QKMEWFEEAQ (64 aa).

This sequence belongs to the universal ribosomal protein uS4 family. In terms of assembly, part of the 30S ribosomal subunit. Contacts protein S5. The interaction surface between S4 and S5 is involved in control of translational fidelity.

One of the primary rRNA binding proteins, it binds directly to 16S rRNA where it nucleates assembly of the body of the 30S subunit. Functionally, with S5 and S12 plays an important role in translational accuracy. The polypeptide is Small ribosomal subunit protein uS4 (Corynebacterium aurimucosum (strain ATCC 700975 / DSM 44827 / CIP 107346 / CN-1) (Corynebacterium nigricans)).